A 43-amino-acid chain; its full sequence is Defensin (43 aa).

Cystine bridges form between Cys-3/Cys-34, Cys-20/Cys-39, and Cys-24/Cys-41.

It is found in the secreted. Functionally, antibacterial peptide. Affects Gram-negative bacteria including methicillin-resistant Staphylococcus aureus. The chain is Defensin from Trypoxylus dichotomus (Japanese rhinoceros beetle).